Consider the following 81-residue polypeptide: Costars family protein ABRACL (81 aa).

This sequence belongs to the costars family.

This Coturnix coturnix (Common quail) protein is Costars family protein ABRACL.